The sequence spans 57 residues: uncharacterized protein (57 aa).

Residues 4-26 (FMPIRVFLYSYVIINSLLSSFFH) traverse the membrane as a helical segment.

It is found in the membrane. This is an uncharacterized protein from Saccharomyces cerevisiae (strain ATCC 204508 / S288c) (Baker's yeast).